The primary structure comprises 154 residues: MKPRQKRLVLIVGIVAAVGVAAALVLNAFQSNLVFFYSPAQVAAKEAPVGRAFRLGGLVDGGSVQRDGLVVRFVVTDTVKSIPVRYQGILPDLFKEGKGVVAQGQLGDDGVFVAREVLAKHDENYMPPEAAEALQRAGASNQKLGETVVKETRP.

Over 1-7 (MKPRQKR) the chain is Cytoplasmic. The chain crosses the membrane as a helical; Signal-anchor for type II membrane protein span at residues 8 to 28 (LVLIVGIVAAVGVAAALVLNA). Residues 29–154 (FQSNLVFFYS…GETVVKETRP (126 aa)) lie on the Periplasmic side of the membrane. Heme is bound by residues H121 and Y125. A disordered region spans residues 131-154 (AEALQRAGASNQKLGETVVKETRP).

The protein belongs to the CcmE/CycJ family.

It is found in the cell inner membrane. Its function is as follows. Heme chaperone required for the biogenesis of c-type cytochromes. Transiently binds heme delivered by CcmC and transfers the heme to apo-cytochromes in a process facilitated by CcmF and CcmH. This chain is Cytochrome c-type biogenesis protein CcmE, found in Methylibium petroleiphilum (strain ATCC BAA-1232 / LMG 22953 / PM1).